The sequence spans 295 residues: Polyprenyl transferase dpmaC (295 aa).

The next 8 membrane-spanning stretches (helical) occupy residues 39 to 59, 84 to 104, 109 to 124, 131 to 151, 168 to 188, 213 to 233, 237 to 257, and 271 to 291; these read LFCV…NDWI, QAFV…HVML, VHVI…YPFL, KLHI…AIPG, YCLP…TAYS, LVLV…LTQF, WLWV…LALF, and SNFV…LLKA.

Belongs to the UbiA prenyltransferase family. Mg(2+) serves as cofactor.

The protein resides in the membrane. It participates in secondary metabolite biosynthesis; terpenoid biosynthesis. Its function is as follows. Polyprenyl transferase; part of the gene cluster that mediates the biosynthesis of the diterpenoid pyrones subglutinols A and B. The first step of the pathway is the synthesis of the alpha-pyrone moiety by the polyketide synthase dpmaA via condensation of one acetyl-CoA starter unit with 3 malonyl-CoA units and 2 methylations. The alpha-pyrone is then combined with geranylgeranyl pyrophosphate (GGPP) formed by the GGPP synthase dpmaD through the action of the prenyltransferase dpmaC to yield a linear alpha-pyrone diterpenoid. Subsequent steps in the diterpenoid pyrone biosynthetic pathway involve the decalin core formation, which is initiated by the epoxidation of the C10-C11 olefin by the FAD-dependent oxidoreductase dpmaE, and is followed by a cyclization cascade catalyzed by the terpene cyclase dpmaB. The dehydrogenase dpmaF is then involved in tetrahydrofuran (THF) ring formation at the C5 unit to complete the formation of subglutinols A and B. This chain is Polyprenyl transferase dpmaC, found in Metarhizium anisopliae (Entomophthora anisopliae).